Consider the following 886-residue polypeptide: Semaphorin-6B (886 aa).

The N-terminal stretch at 1–26 (MWTPRVPPPRPALSFFLLLLLGVTYG) is a signal peptide. Over 27–605 (LFPEEPPPLS…VSVNLLVTSS (579 aa)) the chain is Extracellular. The region spanning 32 to 525 (PPPLSVAPRD…FPRCVVRVPV (494 aa)) is the Sema domain. A glycan (N-linked (GlcNAc...) asparagine) is linked at Asn-75. 2 disulfides stabilise this stretch: Cys-117–Cys-127 and Cys-145–Cys-154. N-linked (GlcNAc...) asparagine glycosylation is found at Asn-156 and Asn-292. 2 disulfides stabilise this stretch: Cys-268/Cys-379 and Cys-293/Cys-338. Asn-387, Asn-442, and Asn-463 each carry an N-linked (GlcNAc...) asparagine glycan. 4 cysteine pairs are disulfide-bonded: Cys-487/Cys-519, Cys-528/Cys-546, Cys-534/Cys-580, and Cys-538/Cys-554. The chain crosses the membrane as a helical span at residues 606-626 (VAAFVVGAVVSGFSVGWFVGL). Over 627-886 (RERRELARRK…TGERTAPPVP (260 aa)) the chain is Cytoplasmic. Disordered regions lie at residues 655–677 (RLGERRGTGPGGRGGAGGGPGGP), 697–731 (HGGPHDLDTGLLPTPEQTPLPQKRLPTPHPHAHAL), and 761–886 (EQPQ…PPVP). The span at 662–674 (TGPGGRGGAGGGP) shows a compositional bias: gly residues. Arg-667 is modified (omega-N-methylarginine). A compositionally biased stretch (low complexity) spans 707–718 (LLPTPEQTPLPQ).

It belongs to the semaphorin family. Homodimer. Binds specifically the SH3 domain of the protooncogene C-SRC. In adulthood, it is expressed ubiquitously.

The protein localises to the cell membrane. Its function is as follows. Functions as a cell surface repellent for mossy fibers of developing neurons in the hippocampus where it plays a role in axon guidance. May function through the PLXNA4 receptor expressed by mossy cell axons. The polypeptide is Semaphorin-6B (Sema6b) (Mus musculus (Mouse)).